Reading from the N-terminus, the 521-residue chain is FAD-dependent monooxygenase mdpD (521 aa).

Positions 1–48 (MTHFPVNIASDKQEFDPERWAKTPTTESSVNGENGTAPTSGLPSRHPS) are disordered. A compositionally biased stretch (basic and acidic residues) spans 11-21 (DKQEFDPERWA). Polar residues predominate over residues 23–48 (TPTTESSVNGENGTAPTSGLPSRHPS). FAD is bound by residues Val94 and Arg160. Active-site residues include Arg244 and Tyr271. Asp369 and Gly382 together coordinate FAD.

It belongs to the paxM FAD-dependent monooxygenase family. FAD is required as a cofactor.

The protein operates within secondary metabolite biosynthesis. Its function is as follows. FAD-dependent monooxygenase; part of the gene cluster that mediates the biosynthesis of monodictyphenone, a prenyl xanthone derivative. The pathway begins with the synthesis of atrochrysone thioester by the polyketide synthase (PKS) mdpG. The atrochrysone carboxyl ACP thioesterase mdpF then breaks the thioester bond and releases the atrochrysone carboxylic acid from mdpG. The atrochrysone carboxylic acid is then converted to atrochrysone which is further transformed into emodin anthrone. The next step is performed by the anthrone oxygenase mdpH that catalyzes the oxidation of emodinanthrone to emodin. Emodin is further modified to yield monodictyphenone via several steps involving mdpB, mdpC mdpJ, mdpK and mdpL. These enzymes with xptA, xptB and xptC are also proposed to be involved in the synthesis of shamixanthone from emodin. Especially, direct reduction of emodin by the short chain dehydrogenase mdpC followed by dehydration catalyzed by the scytalone dehydratase-like protein mdpB gives loss of oxygen and formation of chrysophanol intermediate in two simple steps. This is FAD-dependent monooxygenase mdpD from Emericella nidulans (strain FGSC A4 / ATCC 38163 / CBS 112.46 / NRRL 194 / M139) (Aspergillus nidulans).